A 264-amino-acid polypeptide reads, in one-letter code: GTP cyclohydrolase FolE2 (264 aa).

This sequence belongs to the GTP cyclohydrolase IV family.

It carries out the reaction GTP + H2O = 7,8-dihydroneopterin 3'-triphosphate + formate + H(+). It functions in the pathway cofactor biosynthesis; 7,8-dihydroneopterin triphosphate biosynthesis; 7,8-dihydroneopterin triphosphate from GTP: step 1/1. Converts GTP to 7,8-dihydroneopterin triphosphate. The chain is GTP cyclohydrolase FolE2 from Nitratidesulfovibrio vulgaris (strain ATCC 29579 / DSM 644 / CCUG 34227 / NCIMB 8303 / VKM B-1760 / Hildenborough) (Desulfovibrio vulgaris).